A 731-amino-acid polypeptide reads, in one-letter code: Zinc finger protein 615 (731 aa).

The KRAB domain maps to 8 to 79 (LTLEDVAVDF…EDEIYSRICS (72 aa)). C2H2-type zinc fingers lie at residues 204-226 (HVCS…QRVH), 232-254 (HVCS…QRTH), 260-282 (YECT…QKTH), 288-310 (YTCS…QRTH), 316-338 (HGCS…QKTH), 344-366 (YICS…HRTH), 372-394 (FICN…QQTH), 400-422 (YTCS…QRTH), 428-450 (YKCN…QRTH), 456-478 (YVCT…QRTH), 484-506 (YICN…QRTH), 512-534 (YVCG…QRTH), 540-562 (YICN…RRTH), 568-590 (YVCS…QRTH), 596-618 (YICN…QQTH), 624-646 (YKCN…QRFH), 652-674 (FACT…QRIH), 680-702 (YKCS…QRKH), and 708-730 (YGCS…RRIH).

This sequence belongs to the krueppel C2H2-type zinc-finger protein family.

It localises to the nucleus. Functionally, may be involved in transcriptional regulation. The sequence is that of Zinc finger protein 615 (ZNF615) from Homo sapiens (Human).